Consider the following 592-residue polypeptide: Malic enzyme, hydrogenosomal (592 aa).

The N-terminal 27 residues, 1–27 (MLAPIQTIARPVSSILPATGALAAKRT), are a transit peptide targeting the hydrogenosome. Residue Tyr134 is the Proton donor of the active site. 182 to 205 (VTDGSRILGLGDLGAGGMQIPIGK) serves as a coordination point for NADP(+). Arg187 serves as a coordination point for NAD(+). The Proton acceptor role is filled by Lys205. Residues Glu276, Asp277, and Asp300 each coordinate a divalent metal cation. Residue Asp300 coordinates NAD(+). Residue 335–352 (GAGSSGVGVCETIVDCIV) coordinates NADP(+). Asn443 provides a ligand contact to NAD(+).

This sequence belongs to the malic enzymes family. Requires Mg(2+) as cofactor. Mn(2+) serves as cofactor.

Its subcellular location is the hydrogenosome. The enzyme catalyses (S)-malate + NADP(+) = pyruvate + CO2 + NADPH. It carries out the reaction oxaloacetate + H(+) = pyruvate + CO2. The protein is Malic enzyme, hydrogenosomal of Neocallimastix frontalis (Rumen fungus).